Consider the following 544-residue polypeptide: Probable protein kinase UbiB (544 aa).

A Protein kinase domain is found at 123-505; the sequence is EFDEQALASA…GRQKSHNVRS (383 aa). Residues 129–137 and K156 contribute to the ATP site; that span reads LASASIAQV. The Proton acceptor role is filled by D291. The chain crosses the membrane as a helical span at residues 522–540; it reads LPLWLSCGTLVTVLLVLLL.

This sequence belongs to the ABC1 family. UbiB subfamily.

It localises to the cell inner membrane. It participates in cofactor biosynthesis; ubiquinone biosynthesis [regulation]. In terms of biological role, is probably a protein kinase regulator of UbiI activity which is involved in aerobic coenzyme Q (ubiquinone) biosynthesis. The sequence is that of Probable protein kinase UbiB from Actinobacillus pleuropneumoniae serotype 5b (strain L20).